Reading from the N-terminus, the 604-residue chain is Choline transporter-like protein 3 (604 aa).

N-linked (GlcNAc...) asparagine glycosylation is found at N90 and N103. The next 5 helical transmembrane spans lie at 165-185 (DTIL…LFTF), 195-215 (IIIS…WWLY), 237-257 (LAFA…IFTL), 286-306 (LWTF…LLSL), and 330-350 (YLWW…LTCQ). N-linked (GlcNAc...) asparagine glycans are attached at residues N454 and N472. A run of 2 helical transmembrane segments spans residues 485–505 (FIIF…GLMA) and 514–534 (VWAI…HSFL). The segment covering 581 to 592 (NARSQGHKNSLP) has biased composition (polar residues). Positions 581–604 (NARSQGHKNSLPNEEGTELRPIVR) are disordered.

This sequence belongs to the CTL (choline transporter-like) family. In terms of tissue distribution, expressed in colon, kidney and ileum.

The protein resides in the membrane. This is Choline transporter-like protein 3 (Slc44a3) from Rattus norvegicus (Rat).